The sequence spans 313 residues: Formimidoylglutamase (313 aa).

Residues histidine 130, aspartate 155, histidine 157, aspartate 159, aspartate 241, and aspartate 243 each contribute to the Mn(2+) site.

The protein belongs to the arginase family. Mn(2+) is required as a cofactor.

The enzyme catalyses N-formimidoyl-L-glutamate + H2O = formamide + L-glutamate. It participates in amino-acid degradation; L-histidine degradation into L-glutamate; L-glutamate from N-formimidoyl-L-glutamate (hydrolase route): step 1/1. Its function is as follows. Catalyzes the conversion of N-formimidoyl-L-glutamate to L-glutamate and formamide. The sequence is that of Formimidoylglutamase from Salmonella agona (strain SL483).